A 71-amino-acid polypeptide reads, in one-letter code: Conotoxin Tx11.3 (71 aa).

Residues 1–19 form the signal peptide; sequence MKLCVTFLLVLVILPSVTG. Positions 20–47 are excised as a propeptide; it reads VKSSERTLSGAALRGDRGTCSGRGQECK. Disulfide bonds link Cys-39-Cys-53, Cys-46-Cys-58, Cys-52-Cys-63, and Cys-57-Cys-70.

This sequence belongs to the I1 superfamily. Expressed by the venom duct.

The protein localises to the secreted. The protein is Conotoxin Tx11.3 of Conus textile (Cloth-of-gold cone).